The chain runs to 708 residues: Ion-translocating oxidoreductase complex subunit C (708 aa).

2 consecutive 4Fe-4S ferredoxin-type domains span residues G369–Y397 and K407–F436. The [4Fe-4S] cluster site is built by C377, C380, C383, C387, C416, C419, C422, and C426. The segment at A630–P682 is disordered.

Belongs to the 4Fe4S bacterial-type ferredoxin family. RnfC subfamily. In terms of assembly, the complex is composed of six subunits: RsxA, RsxB, RsxC, RsxD, RsxE and RsxG. It depends on [4Fe-4S] cluster as a cofactor.

Its subcellular location is the cell inner membrane. Functionally, part of a membrane-bound complex that couples electron transfer with translocation of ions across the membrane. Required to maintain the reduced state of SoxR. This is Ion-translocating oxidoreductase complex subunit C from Escherichia coli (strain UTI89 / UPEC).